The chain runs to 335 residues: Pyridoxal 5'-phosphate synthase subunit PdxS (335 aa).

Residue aspartate 30 coordinates D-ribose 5-phosphate. Lysine 87 functions as the Schiff-base intermediate with D-ribose 5-phosphate in the catalytic mechanism. Glycine 159 serves as a coordination point for D-ribose 5-phosphate. Residue arginine 171 participates in D-glyceraldehyde 3-phosphate binding. D-ribose 5-phosphate is bound by residues glycine 257 and 278 to 279; that span reads GS.

This sequence belongs to the PdxS/SNZ family. As to quaternary structure, in the presence of PdxT, forms a dodecamer of heterodimers.

The catalysed reaction is aldehydo-D-ribose 5-phosphate + D-glyceraldehyde 3-phosphate + L-glutamine = pyridoxal 5'-phosphate + L-glutamate + phosphate + 3 H2O + H(+). The protein operates within cofactor biosynthesis; pyridoxal 5'-phosphate biosynthesis. In terms of biological role, catalyzes the formation of pyridoxal 5'-phosphate from ribose 5-phosphate (RBP), glyceraldehyde 3-phosphate (G3P) and ammonia. The ammonia is provided by the PdxT subunit. Can also use ribulose 5-phosphate and dihydroxyacetone phosphate as substrates, resulting from enzyme-catalyzed isomerization of RBP and G3P, respectively. The chain is Pyridoxal 5'-phosphate synthase subunit PdxS from Thermococcus kodakarensis (strain ATCC BAA-918 / JCM 12380 / KOD1) (Pyrococcus kodakaraensis (strain KOD1)).